A 366-amino-acid chain; its full sequence is 5-hydroxytryptamine receptor 1F (366 aa).

Over M1–I24 the chain is Extracellular. N5 and N10 each carry an N-linked (GlcNAc...) asparagine glycan. The helical transmembrane segment at L25–I49 threads the bilayer. The Cytoplasmic portion of the chain corresponds to V50–N59. Residues Y60 to I81 form a helical membrane-spanning segment. The Extracellular portion of the chain corresponds to V82–C96. An intrachain disulfide couples C96 to C172. The chain crosses the membrane as a helical span at residues D97–L119. The serotonin site is built by D103 and C107. The DRY motif; important for ligand-induced conformation changes signature appears at D120 to Y122. Over D120–Q139 the chain is Cytoplasmic. The helical transmembrane segment at A140–L159 threads the bilayer. Residues F160–H178 lie on the Extracellular side of the membrane. Residues I179–Y202 form a helical membrane-spanning segment. The Cytoplasmic portion of the chain corresponds to K203–A291. The helical transmembrane segment at A292–V315 threads the bilayer. The Extracellular portion of the chain corresponds to V316–E327. The helical transmembrane segment at M328–F350 threads the bilayer. The NPxxY motif; important for ligand-induced conformation changes and signaling motif lies at N343–Y347. At N351–Y366 the chain is on the cytoplasmic side.

Belongs to the G-protein coupled receptor 1 family.

It is found in the cell membrane. Functionally, G-protein coupled receptor for 5-hydroxytryptamine (serotonin). Also functions as a receptor for various alkaloids and psychoactive substances. Ligand binding causes a conformation change that triggers signaling via guanine nucleotide-binding proteins (G proteins) and modulates the activity of downstream effectors, such as adenylate cyclase. HTR1F is coupled to G(i)/G(o) G alpha proteins and mediates inhibitory neurotransmission by inhibiting adenylate cyclase activity. The chain is 5-hydroxytryptamine receptor 1F (HTR1F) from Cavia porcellus (Guinea pig).